Here is a 603-residue protein sequence, read N- to C-terminus: Peroxisomal targeting signal receptor (603 aa).

Residue C10 forms a Glycyl cysteine thioester (Cys-Gly) (interchain with G-Cter in ubiquitin) linkage. An amphipathic helix 1 (AH1) region spans residues 11-33 (SANSNAIAQFNKHTQQDRSLQRQ). K22 participates in a covalent cross-link: Glycyl lysine isopeptide (Lys-Gly) (interchain with G-Cter in ubiquitin). The interval 23–49 (HTQQDRSLQRQAANQQGIVQNGQGFKK) is disordered. The span at 31-45 (QRQAANQQGIVQNGQ) shows a compositional bias: polar residues. The interval 58 to 76 (RQNMDQFMNNGPSQSNFQF) is amphipathic helix 2 (AH2). 3 consecutive short sequence motifs (wxxxF/Y motif) follow at residues 99-103 (WTNEF), 128-132 (WATEF), and 192-196 (WDNQF). The segment at 232–248 (FQEVWDSLNSEEVENDF) is amphipathic helix 4 (AH4). The WxxxF/Y motif 4 signature appears at 271–275 (WEKDF). TPR repeat units follow at residues 304-338 (ESDP…NEGH), 339-372 (INAW…HPEN), 449-482 (PDVQ…KPDD), 484-516 (VLWN…KPTF), and 518-550 (RARY…HQVE).

The protein belongs to the peroxisomal targeting signal receptor family. As to quaternary structure, interacts (via WxxxF/Y and LVxEF motifs) with PEX14; promoting translocation through the PEX13-PEX14 docking complex. Monoubiquitinated at Cys-10 by PEX2 during PEX5 passage through the retrotranslocation channel: monoubiquitination acts as a signal for PEX5 extraction and is required for proper export from peroxisomes and recycling. When PEX5 recycling is compromised, polyubiquitinated at Lys-22 by PEX10 during its passage through the retrotranslocation channel, leading to its degradation.

It localises to the cytoplasm. The protein resides in the cytosol. Its subcellular location is the peroxisome matrix. Its function is as follows. Receptor that mediates peroxisomal import of proteins containing a C-terminal PTS1-type tripeptide peroxisomal targeting signal (SKL-type). Binds to cargo proteins containing a PTS1 peroxisomal targeting signal in the cytosol, and translocates them into the peroxisome matrix by passing through the PEX13-PEX14 docking complex along with cargo proteins. PEX5 receptor is then retrotranslocated into the cytosol, leading to release of bound cargo in the peroxisome matrix, and reset for a subsequent peroxisome import cycle. In Debaryomyces hansenii (strain ATCC 36239 / CBS 767 / BCRC 21394 / JCM 1990 / NBRC 0083 / IGC 2968) (Yeast), this protein is Peroxisomal targeting signal receptor (PEX5).